Here is a 157-residue protein sequence, read N- to C-terminus: Protein Smg (157 aa).

This sequence belongs to the Smg family.

This is Protein Smg from Shigella boydii serotype 4 (strain Sb227).